Consider the following 116-residue polypeptide: Putative UPF0320 protein YLL065W (116 aa).

It belongs to the UPF0320 family.

In Saccharomyces cerevisiae (strain ATCC 204508 / S288c) (Baker's yeast), this protein is Putative UPF0320 protein YLL065W.